A 186-amino-acid chain; its full sequence is MSIAEIKKNAEAKMAKSVEAFKNELQKIRTGRAHPGILDQVHVDYYGSNLPLSQVANVTLIDARTISVQPWEKSMAQKIEKAIRESDLGLNPSSMGDLIRVPMPALTEERRKELTKVVRHAGEDSKVAVRNLRRDANDQAKKLLKDKLISEDDERRSVDEVQKLTDRVIAEIDRLVHGKEAEILAV.

Belongs to the RRF family.

Its subcellular location is the cytoplasm. Responsible for the release of ribosomes from messenger RNA at the termination of protein biosynthesis. May increase the efficiency of translation by recycling ribosomes from one round of translation to another. In Leptothrix cholodnii (strain ATCC 51168 / LMG 8142 / SP-6) (Leptothrix discophora (strain SP-6)), this protein is Ribosome-recycling factor.